Consider the following 551-residue polypeptide: Putative transport protein CGSHiEE_03135 (551 aa).

Transmembrane regions (helical) follow at residues 4–24 (IAIT…IGHW), 28–48 (GVGL…HFTD), 65–85 (FGLI…FFSS), 95–115 (AFAI…HKIA), and 157–177 (VSYA…MWLI). 2 RCK C-terminal domains span residues 191 to 275 (RFNA…IIGY) and 277 to 360 (VDAP…VIGN). The next 6 membrane-spanning stretches (helical) occupy residues 370 to 390 (MLPV…PFYI), 402 to 424 (AGGP…LYWF), 438 to 458 (IVLF…DTLV), 463 to 483 (LEWM…AGTI), 492 to 512 (YLTI…LAFA), and 529 to 549 (VYPL…VLLW).

This sequence belongs to the AAE transporter (TC 2.A.81) family. YidE subfamily.

The protein localises to the cell membrane. The chain is Putative transport protein CGSHiEE_03135 from Haemophilus influenzae (strain PittEE).